Consider the following 492-residue polypeptide: Cholesteryl ester transfer protein (492 aa).

A signal peptide spans 1-17; the sequence is MLAVTLLSLALLGSTCA. The cysteines at positions 160 and 201 are disulfide-linked. A glycan (N-linked (GlcNAc...) asparagine) is linked at Asn257.

It belongs to the BPI/LBP/Plunc superfamily. BPI/LBP family.

Its subcellular location is the secreted. It carries out the reaction cholesteryl (9Z-octadecenoate)(in) = cholesteryl (9Z-octadecenoate)(out). The enzyme catalyses 1,2,3-tri-(9Z-octadecenoyl)-glycerol(in) = 1,2,3-tri-(9Z-octadecenoyl)-glycerol(out). It catalyses the reaction cholesteryl (9Z,12Z)-octadecadienoate(in) = cholesteryl (9Z,12Z)-octadecadienoate(out). Functionally, involved in the transfer of neutral lipids, including cholesteryl ester and triglyceride, among lipoprotein particles. Allows the net movement of cholesteryl ester from high density lipoproteins/HDL to triglyceride-rich very low density lipoproteins/VLDL, and the equimolar transport of triglyceride from VLDL to HDL. Regulates the reverse cholesterol transport, by which excess cholesterol is removed from peripheral tissues and returned to the liver for elimination. The sequence is that of Cholesteryl ester transfer protein from Cricetulus griseus (Chinese hamster).